Here is a 122-residue protein sequence, read N- to C-terminus: Ribonuclease P protein component 1 (122 aa).

This sequence belongs to the eukaryotic/archaeal RNase P protein component 1 family. Consists of a catalytic RNA component and at least 4-5 protein subunits.

It localises to the cytoplasm. The catalysed reaction is Endonucleolytic cleavage of RNA, removing 5'-extranucleotides from tRNA precursor.. Part of ribonuclease P, a protein complex that generates mature tRNA molecules by cleaving their 5'-ends. The protein is Ribonuclease P protein component 1 of Thermococcus sibiricus (strain DSM 12597 / MM 739).